Reading from the N-terminus, the 135-residue chain is C-type lectin PAL (135 aa).

Disulfide bonds link cysteine 3/cysteine 14, cysteine 31/cysteine 131, cysteine 38/cysteine 133, and cysteine 106/cysteine 123. One can recognise a C-type lectin domain in the interval methionine 10–glutamine 132. Residues glutamine 96, aspartate 98, glutamate 104, asparagine 119, and aspartate 120 each contribute to the Ca(2+) site. The Galactose-binding signature appears at glutamine 96–aspartate 98.

This sequence belongs to the true venom lectin family. As to quaternary structure, homodimer; disulfide-linked. In terms of tissue distribution, expressed by the venom gland.

The protein resides in the secreted. In terms of biological role, galactose-binding lectin which recognizes specific carbohydrate structures and agglutinates a variety of animal cells by binding to cell-surface glycoproteins and glycolipids. This is a calcium-dependent lectin. Shows high hemagglutinating activity (MHC is 0.25 ug/ml on rabbit erythrocytes). This Bitis arietans (African puff adder) protein is C-type lectin PAL.